The primary structure comprises 213 residues: Phosphate-specific transport system accessory protein PhoU homolog 2 (213 aa).

This sequence belongs to the PhoU family. Homodimer.

It is found in the cytoplasm. Functionally, plays a role in the regulation of phosphate uptake. In this role, it may bind, possibly as a chaperone, to PhoR, PhoP or a PhoR-PhoP complex to promote dephosphorylation of phospho-PhoP, or inhibit formation of the PhoR-PhoP transitory complex. The sequence is that of Phosphate-specific transport system accessory protein PhoU homolog 2 (phoU2) from Mycobacterium bovis (strain ATCC BAA-935 / AF2122/97).